Consider the following 217-residue polypeptide: MITVALAKGALLKDSAARFAAAGLDFSAALDKDNRQLMLPTPCGRARALLVRNGDVPTYVAYGQAQLGVVGYDVLREHQLPVAQLVDLGFGGCRMAVAVKASSGYERAADLPPHCRVASKFTHCAREYFDGLDLPVELVHLNGSVELGPITGMSEAIVDLVATGRTLRDNGLVAIEDLFHTTARLVGHPLSMRLDDGSLNAIVEAVRTASAAAGAAG.

This sequence belongs to the ATP phosphoribosyltransferase family. Short subfamily. Heteromultimer composed of HisG and HisZ subunits.

The protein resides in the cytoplasm. It carries out the reaction 1-(5-phospho-beta-D-ribosyl)-ATP + diphosphate = 5-phospho-alpha-D-ribose 1-diphosphate + ATP. It participates in amino-acid biosynthesis; L-histidine biosynthesis; L-histidine from 5-phospho-alpha-D-ribose 1-diphosphate: step 1/9. Catalyzes the condensation of ATP and 5-phosphoribose 1-diphosphate to form N'-(5'-phosphoribosyl)-ATP (PR-ATP). Has a crucial role in the pathway because the rate of histidine biosynthesis seems to be controlled primarily by regulation of HisG enzymatic activity. The sequence is that of ATP phosphoribosyltransferase from Parasynechococcus marenigrum (strain WH8102).